Consider the following 292-residue polypeptide: MNYAKEINALNNSLSDLKGDINVSFEFFPPKNEQMETMLWDSIHRLQTLHPKFVSVTYGANSGERDRTHGIVKRIKQETGLEAAPHLTGIDASPDELRQIAKDYWDSGIRRIVALRGDEPAGYEKKPFYAEDLVKLLRSVADFDISVAAYPEVHPEAKSAQADLINLKRKIDAGANHVITQFFFDVERYLRFRDRCVMLGIDVEIVPGILPVTNFKQLGKMAQVTNVKIPSWLSQMYEGLDDDQGTRNLVAASIAIDMVKVLSREGVKDFHFYTLNRSELTYAICHILGVRP.

Glutamate 26 acts as the Proton donor/acceptor in catalysis. Threonine 57 is an NADH binding site. FAD contacts are provided by tyrosine 58, alanine 60, histidine 86, arginine 116, glycine 117, aspartate 118, alanine 130, tyrosine 150, histidine 154, alanine 157, aspartate 163, asparagine 166, arginine 169, and lysine 170. Aspartate 118 lines the (6S)-5-methyl-5,6,7,8-tetrahydrofolate pocket. Glutamine 181 lines the NADH pocket. (6S)-5-methyl-5,6,7,8-tetrahydrofolate-binding residues include glutamine 181, glutamine 217, and arginine 277.

Belongs to the methylenetetrahydrofolate reductase family. FAD serves as cofactor.

The enzyme catalyses (6S)-5-methyl-5,6,7,8-tetrahydrofolate + NAD(+) = (6R)-5,10-methylene-5,6,7,8-tetrahydrofolate + NADH + H(+). It participates in one-carbon metabolism; tetrahydrofolate interconversion. Its pathway is amino-acid biosynthesis; L-methionine biosynthesis via de novo pathway. In terms of biological role, catalyzes the NADH-dependent reduction of 5,10-methylenetetrahydrofolate to 5-methyltetrahydrofolate. Is required to provide the methyl group necessary for methionine synthetase to convert homocysteine to methionine; the methyl group is given by 5-methyltetrahydrofolate. This is 5,10-methylenetetrahydrofolate reductase (metF) from Neisseria meningitidis serogroup B (strain ATCC BAA-335 / MC58).